The primary structure comprises 121 residues: Large ribosomal subunit protein bL19 (121 aa).

The protein belongs to the bacterial ribosomal protein bL19 family.

In terms of biological role, this protein is located at the 30S-50S ribosomal subunit interface and may play a role in the structure and function of the aminoacyl-tRNA binding site. This chain is Large ribosomal subunit protein bL19, found in Gloeobacter violaceus (strain ATCC 29082 / PCC 7421).